Here is a 47-residue protein sequence, read N- to C-terminus: Defensin Tk-AMP-D1.1 (47 aa).

Cystine bridges form between Cys3–Cys47, Cys14–Cys34, Cys20–Cys41, and Cys24–Cys43.

Plant defense peptide. The polypeptide is Defensin Tk-AMP-D1.1 (Triticum kiharae (Wheat)).